Reading from the N-terminus, the 293-residue chain is 4-hydroxy-tetrahydrodipicolinate synthase (293 aa).

A pyruvate-binding site is contributed by Thr-44. Catalysis depends on Tyr-132, which acts as the Proton donor/acceptor. Residue Lys-161 is the Schiff-base intermediate with substrate of the active site. Ile-203 is a binding site for pyruvate.

Belongs to the DapA family. In terms of assembly, homotetramer; dimer of dimers.

Its subcellular location is the cytoplasm. It carries out the reaction L-aspartate 4-semialdehyde + pyruvate = (2S,4S)-4-hydroxy-2,3,4,5-tetrahydrodipicolinate + H2O + H(+). The protein operates within amino-acid biosynthesis; L-lysine biosynthesis via DAP pathway; (S)-tetrahydrodipicolinate from L-aspartate: step 3/4. Functionally, catalyzes the condensation of (S)-aspartate-beta-semialdehyde [(S)-ASA] and pyruvate to 4-hydroxy-tetrahydrodipicolinate (HTPA). The polypeptide is 4-hydroxy-tetrahydrodipicolinate synthase (Persephonella marina (strain DSM 14350 / EX-H1)).